We begin with the raw amino-acid sequence, 778 residues long: IQ domain-containing protein E (778 aa).

Disordered stretches follow at residues 1–71 (MSLG…LSSR) and 83–108 (SSKQ…HPPS). Low complexity predominate over residues 37 to 49 (KPPSTSPKSPYYS). The segment covering 83–101 (SSKQGSVAQPPSPTLTSEH) has biased composition (polar residues). A coiled-coil region spans residues 157 to 323 (LHMQKSDVDL…DLDRMLSNSP (167 aa)). Ser322 carries the post-translational modification Phosphoserine. 4 disordered regions span residues 348–392 (KKVS…EDLP), 443–462 (ETAR…LREE), 474–529 (EEAK…SEER), and 573–612 (LVRS…AEEN). Positions 352-362 (SSESPKQSTSE) are enriched in low complexity. Residues 398-486 (EEQEHLQGTV…KREEKNSFVA (89 aa)) are a coiled coil. IQ domains follow at residues 553–582 (LDEA…PDSR) and 615–644 (QEEA…REIA). Positions 581–598 (SRSPSLPGLLSPLNQSSP) are enriched in low complexity. Residues 651 to 662 (TVSLTPSGSASP) are compositionally biased toward polar residues. The disordered stretch occupies residues 651–778 (TVSLTPSGSA…LPRKKSPSPF (128 aa)). Position 661 is a phosphoserine (Ser661). Over residues 672–686 (IRKELCASEELRETS) the composition is skewed to basic and acidic residues. Over residues 739 to 752 (PSPPELQPLSPPPV) the composition is skewed to pro residues.

As to quaternary structure, component of the EvC complex composed of EFCAB7, IQCE, EVC2 and EVC; built from two subcomplexes, EVC2:EVC and EFCAB7:IQCE. Interacts (via N-terminus) with EFCAB7 (via EF-hands 1 and 2); this interaction anchors the EVC-EVC2 complex in a signaling microdomain at the base of cilia and stimulates the Hedgehog (Hh) pathway. Interacts with EVC2 (via N-terminal end). Interacts with EVC.

The protein localises to the cell projection. It is found in the cilium membrane. Component of the EvC complex that positively regulates ciliary Hedgehog (Hh) signaling. Required for proper limb morphogenesis. The protein is IQ domain-containing protein E (Iqce) of Mus musculus (Mouse).